The chain runs to 319 residues: Carboxylesterase NlhH (319 aa).

The Involved in the stabilization of the negatively charged intermediate by the formation of the oxyanion hole signature appears at 88 to 90 (HGG). Active-site residues include Ser162, Asp260, and His290.

It belongs to the 'GDXG' lipolytic enzyme family. Monomer.

The catalysed reaction is a carboxylic ester + H2O = an alcohol + a carboxylate + H(+). Functionally, hydrolyzes various short-chain esters. The protein is Carboxylesterase NlhH (nlhH) of Mycobacterium tuberculosis (strain CDC 1551 / Oshkosh).